The sequence spans 419 residues: MINRFSIEKVKGLEIVDSRGNPTIRVFIRTSDGVESFGDAPAGASKGTREAVEVRDENGLTVKRAVDIVNYIIDPALHGIDVREQGIIDKLLKDIDSTENKSKLGGNTIIATSIAALKTASKALGLEVFKYISGPRLPKIPIPLLNIINGGLHAGNKLKIQEFIIVPIKFNTFKEALFAAIDVYRTLKGLITERYGKIYTAVGDEGGFSPPLEDTREALDLIYTSINNAGYEGKIYMGMDAAGSDFYDSKKEKYIIDGRELDPNQLLEFYLDLVKQYPIVYLEDPFEENSFDMFSQLQNKLSSTIITGDDLYTTNIKYLKIGIEKRSTKGVIVKPNQVGTISETFEFTNLARRNSMKLITSHRSGETEDNFIADFAVGIESDFIKVGAPARGERTSKYNKLLEIENKFGLEYEGKYFYL.

Gln-161 is a (2R)-2-phosphoglycerate binding site. The Proton donor role is filled by Glu-205. Residues Asp-240, Glu-283, and Asp-309 each contribute to the Mg(2+) site. Residues Lys-334, Arg-363, Ser-364, and Lys-385 each coordinate (2R)-2-phosphoglycerate. The active-site Proton acceptor is the Lys-334.

It belongs to the enolase family. The cofactor is Mg(2+).

It is found in the cytoplasm. Its subcellular location is the secreted. It localises to the cell surface. It catalyses the reaction (2R)-2-phosphoglycerate = phosphoenolpyruvate + H2O. The protein operates within carbohydrate degradation; glycolysis; pyruvate from D-glyceraldehyde 3-phosphate: step 4/5. In terms of biological role, catalyzes the reversible conversion of 2-phosphoglycerate (2-PG) into phosphoenolpyruvate (PEP). It is essential for the degradation of carbohydrates via glycolysis. In Saccharolobus solfataricus (strain ATCC 35092 / DSM 1617 / JCM 11322 / P2) (Sulfolobus solfataricus), this protein is Enolase.